The chain runs to 103 residues: Small ribosomal subunit protein uS10 (103 aa).

Belongs to the universal ribosomal protein uS10 family. As to quaternary structure, part of the 30S ribosomal subunit.

Involved in the binding of tRNA to the ribosomes. This Borrelia duttonii (strain Ly) protein is Small ribosomal subunit protein uS10.